The chain runs to 515 residues: Rop guanine nucleotide exchange factor 12 (515 aa).

A PRONE domain is found at 83 to 446 (QARERQLLAD…RAGNKRNTPL (364 aa)). Position 510 is a phosphoserine (serine 510).

In terms of assembly, interacts (via C-terminus) with PRK2. Interacts with PRK6. Expressed in pollen grains.

The protein localises to the cytoplasm. It is found in the cell membrane. With respect to regulation, phosphorylation at Ser-510 by PRK2 may release ROPGEF12 auto-inhibition, thereby activating ROPGEF12 and downstream Rop signaling. Guanine-nucleotide exchange factor (GEF) that acts as an activator of Rop (Rho of plants) GTPases by promoting the exchange of GDP for GTP. May be recruited by PRK2 at the plasma membrane to maintain polar Rop activity in the pollen tube and control polarized pollen tube growth. The sequence is that of Rop guanine nucleotide exchange factor 12 from Arabidopsis thaliana (Mouse-ear cress).